Consider the following 273-residue polypeptide: 4-hydroxy-tetrahydrodipicolinate reductase (273 aa).

NAD(+) contacts are provided by residues 12-17 and glutamate 38; that span reads GAGGRM. Arginine 39 is a binding site for NADP(+). NAD(+) contacts are provided by residues 102 to 104 and 126 to 129; these read GTT and AANF. Histidine 159 functions as the Proton donor/acceptor in the catalytic mechanism. Histidine 160 is a binding site for (S)-2,3,4,5-tetrahydrodipicolinate. The active-site Proton donor is the lysine 163. A (S)-2,3,4,5-tetrahydrodipicolinate-binding site is contributed by 169–170; that stretch reads GT.

It belongs to the DapB family. Homotetramer.

The protein resides in the cytoplasm. The catalysed reaction is (S)-2,3,4,5-tetrahydrodipicolinate + NAD(+) + H2O = (2S,4S)-4-hydroxy-2,3,4,5-tetrahydrodipicolinate + NADH + H(+). It carries out the reaction (S)-2,3,4,5-tetrahydrodipicolinate + NADP(+) + H2O = (2S,4S)-4-hydroxy-2,3,4,5-tetrahydrodipicolinate + NADPH + H(+). It functions in the pathway amino-acid biosynthesis; L-lysine biosynthesis via DAP pathway; (S)-tetrahydrodipicolinate from L-aspartate: step 4/4. Its function is as follows. Catalyzes the conversion of 4-hydroxy-tetrahydrodipicolinate (HTPA) to tetrahydrodipicolinate. This is 4-hydroxy-tetrahydrodipicolinate reductase from Escherichia coli O127:H6 (strain E2348/69 / EPEC).